The following is a 140-amino-acid chain: Large ribosomal subunit protein uL11 (140 aa).

It belongs to the universal ribosomal protein uL11 family. In terms of assembly, part of the ribosomal stalk of the 50S ribosomal subunit. Interacts with L10 and the large rRNA to form the base of the stalk. L10 forms an elongated spine to which L12 dimers bind in a sequential fashion forming a multimeric L10(L12)X complex. One or more lysine residues are methylated.

Its function is as follows. Forms part of the ribosomal stalk which helps the ribosome interact with GTP-bound translation factors. The protein is Large ribosomal subunit protein uL11 of Staphylococcus saprophyticus subsp. saprophyticus (strain ATCC 15305 / DSM 20229 / NCIMB 8711 / NCTC 7292 / S-41).